The sequence spans 233 residues: Octanoyltransferase (233 aa).

In terms of domain architecture, BPL/LPL catalytic spans 38–218; that stretch reads AGGPDTLLLL…LVCDALDGVL (181 aa). A compositionally biased stretch (basic and acidic residues) spans 57-66; sequence RRTEPHERPL. The disordered stretch occupies residues 57–77; it reads RRTEPHERPLDGTPVVDTDRG. Residues 76-83, 148-150, and 161-163 each bind substrate; these read RGGKITWH, AIG, and GFA. Cys-179 (acyl-thioester intermediate) is an active-site residue.

The protein belongs to the LipB family.

It localises to the cytoplasm. It carries out the reaction octanoyl-[ACP] + L-lysyl-[protein] = N(6)-octanoyl-L-lysyl-[protein] + holo-[ACP] + H(+). The protein operates within protein modification; protein lipoylation via endogenous pathway; protein N(6)-(lipoyl)lysine from octanoyl-[acyl-carrier-protein]: step 1/2. Catalyzes the transfer of endogenously produced octanoic acid from octanoyl-acyl-carrier-protein onto the lipoyl domains of lipoate-dependent enzymes. Lipoyl-ACP can also act as a substrate although octanoyl-ACP is likely to be the physiological substrate. This chain is Octanoyltransferase, found in Mycobacterium avium (strain 104).